The sequence spans 512 residues: Ankyrin repeat domain-containing protein SOWAHC (512 aa).

Serine 82 and serine 125 each carry phosphoserine. The interval 126–248 (LGLGGEVSDQ…AEEESSVGAS (123 aa)) is disordered. Residues 173 to 186 (PPQGEAEGGSSPSG) show a composition bias toward low complexity. Serine 205 is modified (phosphoserine). Gly residues predominate over residues 214 to 228 (PGDGNAGGRSRGGGD). Residues 229–248 (SDTASLASSSAEEESSVGAS) are compositionally biased toward low complexity. ANK repeat units follow at residues 288–317 (TGFT…KHQL) and 327–357 (GGYT…DVDI). Arginine 395 bears the Omega-N-methylarginine mark. The segment at 427–500 (HVPEGWTGGS…EERSLRGYSS (74 aa)) is disordered. The span at 453–462 (MKPRLNKIRF) shows a compositional bias: basic residues. The segment covering 481–492 (EEGEEEEEEEEE) has biased composition (acidic residues).

This sequence belongs to the SOWAH family.

The sequence is that of Ankyrin repeat domain-containing protein SOWAHC (Sowahc) from Mus musculus (Mouse).